The following is a 164-amino-acid chain: Cytochrome c-type biogenesis protein CcmE (164 aa).

The Cytoplasmic segment spans residues 1 to 8 (MNPRRQKR). A helical; Signal-anchor for type II membrane protein transmembrane segment spans residues 9–29 (LIVISAIVLVIGAAIGLMLYA). The Periplasmic portion of the chain corresponds to 30-164 (LSQNIDLFYT…QAYSTPKVSG (135 aa)). 2 residues coordinate heme: H132 and Y136.

Belongs to the CcmE/CycJ family.

It is found in the cell inner membrane. Its function is as follows. Heme chaperone required for the biogenesis of c-type cytochromes. Transiently binds heme delivered by CcmC and transfers the heme to apo-cytochromes in a process facilitated by CcmF and CcmH. The polypeptide is Cytochrome c-type biogenesis protein CcmE (Pseudoalteromonas atlantica (strain T6c / ATCC BAA-1087)).